We begin with the raw amino-acid sequence, 272 residues long: NAD kinase (272 aa).

The Proton acceptor role is filled by Asp-62. NAD(+) contacts are provided by residues 62–63 (DG), Arg-67, 129–130 (NE), Arg-140, Lys-157, Asp-159, 170–175 (SSYSSS), Ala-194, and Gln-229.

It belongs to the NAD kinase family. The cofactor is a divalent metal cation.

It is found in the cytoplasm. The catalysed reaction is NAD(+) + ATP = ADP + NADP(+) + H(+). In terms of biological role, involved in the regulation of the intracellular balance of NAD and NADP, and is a key enzyme in the biosynthesis of NADP. Catalyzes specifically the phosphorylation on 2'-hydroxyl of the adenosine moiety of NAD to yield NADP. The chain is NAD kinase from Thermoplasma volcanium (strain ATCC 51530 / DSM 4299 / JCM 9571 / NBRC 15438 / GSS1).